The following is a 201-amino-acid chain: Small ribosomal subunit protein uS4 (201 aa).

Residues 91 to 155 enclose the S4 RNA-binding domain; it reads SRLDNVVYRA…STLPFQVARE (65 aa).

The protein belongs to the universal ribosomal protein uS4 family. In terms of assembly, part of the 30S ribosomal subunit. Contacts protein S5. The interaction surface between S4 and S5 is involved in control of translational fidelity.

In terms of biological role, one of the primary rRNA binding proteins, it binds directly to 16S rRNA where it nucleates assembly of the body of the 30S subunit. Its function is as follows. With S5 and S12 plays an important role in translational accuracy. The protein is Small ribosomal subunit protein uS4 of Rhodococcus jostii (strain RHA1).